Reading from the N-terminus, the 341-residue chain is Methionine import ATP-binding protein MetN 2 (341 aa).

The ABC transporter domain maps to 2 to 241 (IELKEVVKEY…PQHTVTKRFV (240 aa)). Residue 38–45 (GFSGAGKS) participates in ATP binding.

It belongs to the ABC transporter superfamily. Methionine importer (TC 3.A.1.24) family. As to quaternary structure, the complex is composed of two ATP-binding proteins (MetN), two transmembrane proteins (MetI) and a solute-binding protein (MetQ).

It is found in the cell membrane. It catalyses the reaction L-methionine(out) + ATP + H2O = L-methionine(in) + ADP + phosphate + H(+). The catalysed reaction is D-methionine(out) + ATP + H2O = D-methionine(in) + ADP + phosphate + H(+). In terms of biological role, part of the ABC transporter complex MetNIQ involved in methionine import. Responsible for energy coupling to the transport system. The polypeptide is Methionine import ATP-binding protein MetN 2 (Staphylococcus aureus (strain bovine RF122 / ET3-1)).